The primary structure comprises 551 residues: L-lactate permease (551 aa).

13 helical membrane-spanning segments follow: residues 13-33, 37-57, 69-89, 131-151, 159-179, 194-214, 220-240, 244-264, 366-386, 405-425, 438-458, 494-514, and 530-550; these read NIWL…FALI, LKGY…ALLF, VVYG…AAVF, GAAG…GLGF, LCLI…PILV, MVGR…MAIM, IKET…AQYL, FIGP…CLTL, FDWF…SIVW, LALP…SNYS, TGHA…FLTG, VTGK…VGLV, and IFTC…TWMI.

Belongs to the lactate permease family.

Its subcellular location is the cell inner membrane. It catalyses the reaction (S)-lactate(in) + H(+)(in) = (S)-lactate(out) + H(+)(out). The catalysed reaction is (R)-lactate(in) + H(+)(in) = (R)-lactate(out) + H(+)(out). The enzyme catalyses glycolate(in) + H(+)(in) = glycolate(out) + H(+)(out). Its activity is regulated as follows. Inhibited by the proton ionophore carbonyl cyanide m-chlorophenylhydrazone (CCCP). Its function is as follows. Uptake of L-lactate across the membrane. Can also transport D-lactate and glycolate. Seems to be driven by a proton motive force. The protein is L-lactate permease of Escherichia coli (strain K12).